The following is an 856-amino-acid chain: DNA mismatch repair protein MutS (856 aa).

Residue 618-625 (GPNMGGKS) coordinates ATP.

It belongs to the DNA mismatch repair MutS family.

Its function is as follows. This protein is involved in the repair of mismatches in DNA. It is possible that it carries out the mismatch recognition step. This protein has a weak ATPase activity. This chain is DNA mismatch repair protein MutS, found in Shewanella baltica (strain OS185).